Here is a 245-residue protein sequence, read N- to C-terminus: Adapter protein MecA (245 aa).

The protein belongs to the MecA family. As to quaternary structure, homodimer.

Its function is as follows. Enables the recognition and targeting of unfolded and aggregated proteins to the ClpC protease or to other proteins involved in proteolysis. This chain is Adapter protein MecA, found in Streptococcus pneumoniae serotype 4 (strain ATCC BAA-334 / TIGR4).